The sequence spans 331 residues: Putative ankyrin repeat protein RBE_0261 (331 aa).

Residues 94 to 159 (QGENVIHKCV…KAKNTLLNIV (66 aa)) form an ANK repeat.

This Rickettsia bellii (strain RML369-C) protein is Putative ankyrin repeat protein RBE_0261.